A 78-amino-acid polypeptide reads, in one-letter code: Large ribosomal subunit protein bL28 (78 aa).

The segment at 1 to 20 is disordered; the sequence is MSRVCQVTGKGPVTGNNISH.

It belongs to the bacterial ribosomal protein bL28 family.

This chain is Large ribosomal subunit protein bL28, found in Azotobacter vinelandii (strain DJ / ATCC BAA-1303).